Here is a 670-residue protein sequence, read N- to C-terminus: Methionine--tRNA ligase (670 aa).

The 'HIGH' region signature appears at 14–24; that stretch reads PYANGHLHLGH. Zn(2+) contacts are provided by cysteine 145, cysteine 148, cysteine 158, and cysteine 161. The 'KMSKS' region motif lies at 330–334; that stretch reads KMSKS. Lysine 333 lines the ATP pocket. The tRNA-binding domain occupies 570–670; the sequence is DFAKVDLRIA…AGALPGMKVK (101 aa).

The protein belongs to the class-I aminoacyl-tRNA synthetase family. MetG type 1 subfamily. Homodimer. It depends on Zn(2+) as a cofactor.

It is found in the cytoplasm. The enzyme catalyses tRNA(Met) + L-methionine + ATP = L-methionyl-tRNA(Met) + AMP + diphosphate. Is required not only for elongation of protein synthesis but also for the initiation of all mRNA translation through initiator tRNA(fMet) aminoacylation. The chain is Methionine--tRNA ligase from Legionella pneumophila (strain Paris).